Consider the following 205-residue polypeptide: Thiamine-phosphate synthase (205 aa).

Residues 36–40 (QYRRK) and aspartate 68 contribute to the 4-amino-2-methyl-5-(diphosphooxymethyl)pyrimidine site. Residues aspartate 69 and aspartate 88 each contribute to the Mg(2+) site. Serine 106 contributes to the 4-amino-2-methyl-5-(diphosphooxymethyl)pyrimidine binding site. 132–134 (SPT) contacts 2-[(2R,5Z)-2-carboxy-4-methylthiazol-5(2H)-ylidene]ethyl phosphate. A 4-amino-2-methyl-5-(diphosphooxymethyl)pyrimidine-binding site is contributed by lysine 135. Residues glycine 162 and 182-183 (IS) each bind 2-[(2R,5Z)-2-carboxy-4-methylthiazol-5(2H)-ylidene]ethyl phosphate.

This sequence belongs to the thiamine-phosphate synthase family. Mg(2+) is required as a cofactor.

The catalysed reaction is 2-[(2R,5Z)-2-carboxy-4-methylthiazol-5(2H)-ylidene]ethyl phosphate + 4-amino-2-methyl-5-(diphosphooxymethyl)pyrimidine + 2 H(+) = thiamine phosphate + CO2 + diphosphate. The enzyme catalyses 2-(2-carboxy-4-methylthiazol-5-yl)ethyl phosphate + 4-amino-2-methyl-5-(diphosphooxymethyl)pyrimidine + 2 H(+) = thiamine phosphate + CO2 + diphosphate. It catalyses the reaction 4-methyl-5-(2-phosphooxyethyl)-thiazole + 4-amino-2-methyl-5-(diphosphooxymethyl)pyrimidine + H(+) = thiamine phosphate + diphosphate. It functions in the pathway cofactor biosynthesis; thiamine diphosphate biosynthesis; thiamine phosphate from 4-amino-2-methyl-5-diphosphomethylpyrimidine and 4-methyl-5-(2-phosphoethyl)-thiazole: step 1/1. In terms of biological role, condenses 4-methyl-5-(beta-hydroxyethyl)thiazole monophosphate (THZ-P) and 2-methyl-4-amino-5-hydroxymethyl pyrimidine pyrophosphate (HMP-PP) to form thiamine monophosphate (TMP). The sequence is that of Thiamine-phosphate synthase from Caldivirga maquilingensis (strain ATCC 700844 / DSM 13496 / JCM 10307 / IC-167).